The primary structure comprises 196 residues: Putative NADH dehydrogenase/NAD(P)H nitroreductase xcc-b100_0585 (196 aa).

It belongs to the nitroreductase family. HadB/RutE subfamily. FMN is required as a cofactor.

This chain is Putative NADH dehydrogenase/NAD(P)H nitroreductase xcc-b100_0585, found in Xanthomonas campestris pv. campestris (strain B100).